A 343-amino-acid polypeptide reads, in one-letter code: D-beta-hydroxybutyrate dehydrogenase, mitochondrial (343 aa).

A mitochondrion-targeting transit peptide spans 1–46; the sequence is MLAARLSRPLSQLPGKALSVCDRENGTRHTLLFYPASFSPDTRRTY. Residue 59–83 participates in NAD(+) binding; it reads LVTGCDSGFGFSLAKHLHSKGFLVF. Lysine 73 is subject to N6-acetyllysine. Residue lysine 103 is modified to N6-acetyllysine; alternate. At lysine 103 the chain carries N6-succinyllysine; alternate. N6-acetyllysine is present on residues lysine 132 and lysine 177. Substrate is bound at residue serine 195. Tyrosine 208 functions as the Proton acceptor in the catalytic mechanism. The residue at position 212 (lysine 212) is an N6-acetyllysine. Serine 219 carries O-linked (GlcNAc) serine glycosylation. Phosphoserine is present on serine 246. At lysine 258 the chain carries N6-acetyllysine. Residue lysine 259 is modified to N6-acetyllysine; alternate. Lysine 259 is modified (N6-succinyllysine; alternate). Position 280 is an N6-acetyllysine (lysine 280).

Belongs to the short-chain dehydrogenases/reductases (SDR) family. As to quaternary structure, homotetramer. Expressed in liver.

The protein localises to the mitochondrion inner membrane. It is found in the mitochondrion matrix. The catalysed reaction is (R)-3-hydroxybutanoate + NAD(+) = acetoacetate + NADH + H(+). Requires phosphatidylcholine as an allosteric activator for enzymatic activity. The protein is D-beta-hydroxybutyrate dehydrogenase, mitochondrial of Rattus norvegicus (Rat).